The sequence spans 432 residues: Amino-acid acetyltransferase (432 aa).

The region spanning 286–425 (ELVREAAIED…ASLYNFQRNS (140 aa)) is the N-acetyltransferase domain.

Belongs to the acetyltransferase family. ArgA subfamily.

It is found in the cytoplasm. The catalysed reaction is L-glutamate + acetyl-CoA = N-acetyl-L-glutamate + CoA + H(+). It functions in the pathway amino-acid biosynthesis; L-arginine biosynthesis; N(2)-acetyl-L-ornithine from L-glutamate: step 1/4. The chain is Amino-acid acetyltransferase from Pseudomonas syringae pv. tomato (strain ATCC BAA-871 / DC3000).